Reading from the N-terminus, the 365-residue chain is Putative agmatine deiminase (365 aa).

The active-site Amidino-cysteine intermediate is Cys-356.

It belongs to the agmatine deiminase family.

The catalysed reaction is agmatine + H2O = N-carbamoylputrescine + NH4(+). This chain is Putative agmatine deiminase, found in Latilactobacillus sakei subsp. sakei (strain 23K) (Lactobacillus sakei subsp. sakei).